We begin with the raw amino-acid sequence, 352 residues long: C-X-C chemokine receptor type 4 (352 aa).

The important for chemokine binding and signaling stretch occupies residues 1-21 (MEGISIYTSDNYTEEMGSGDY). The Extracellular segment spans residues 1 to 38 (MEGISIYTSDNYTEEMGSGDYDSIKEPCFREKNAHFNR). Sulfotyrosine is present on tyrosine 7. N-linked (GlcNAc...) asparagine glycosylation is present at asparagine 11. The residue at position 12 (tyrosine 12) is a Sulfotyrosine. Serine 18 is a glycosylation site (O-linked (Xyl...) (chondroitin sulfate) serine). Position 21 is a sulfotyrosine (tyrosine 21). 2 cysteine pairs are disulfide-bonded: cysteine 28–cysteine 274 and cysteine 109–cysteine 186. A helical membrane pass occupies residues 39-63 (IFLPTIYSIIFLTGIVGNGLVILVM). Topologically, residues 64–77 (GYQKKLRSMTDKYR) are cytoplasmic. The helical transmembrane segment at 78 to 99 (LHLSVADLLFVITLPFWAVDAV) threads the bilayer. A chemokine binding region spans residues 94–97 (WAVD). At 100–110 (ANWYFGNFLCK) the chain is on the extracellular side. Residues 111-130 (AVHVIYTVNLYSSVLILAFI) traverse the membrane as a helical segment. The chemokine binding stretch occupies residues 113 to 117 (HVIYT). Topologically, residues 131–154 (SLDRYLAIVHATNSQKPRKLLAEK) are cytoplasmic. An Important for signaling motif is present at residues 133–135 (DRY). The involved in dimerization; when bound to chemokine stretch occupies residues 135–147 (YLAIVHATNSQKP). A helical transmembrane segment spans residues 155–174 (VVYVGVWIPALLLTIPGFIF). Residues 175 to 195 (ASVSEADDRFICDRFYPNDLW) lie on the Extracellular side of the membrane. A chemokine binding, important for signaling region spans residues 186-190 (CDRFY). An involved in dimerization region spans residues 191-210 (PNDLWVVVFQFQHIMVGLIL). A helical transmembrane segment spans residues 196-216 (VVVFQFQHIMVGLILPGIVIL). Over 217 to 241 (SCYCIIISKLSHSKGHQKRKALKTT) the chain is Cytoplasmic. Residues 242–261 (VILILAFFACWLPYYIGISI) form a helical membrane-spanning segment. Over 262 to 282 (DSFILLEIIKQGCEFENTVHK) the chain is Extracellular. Residues 266-268 (LLE) form an involved in dimerization region. A helical transmembrane segment spans residues 283 to 302 (WISITEALAFFHCCLNPILY). Residues 303–352 (AFLGAKFKTSAQHALTSVSRGSSLKILSKGKRGGHSSVSTESESSSFHSS) are Cytoplasmic-facing. Phosphoserine is present on residues serine 319 and serine 321. 2 positions are modified to phosphoserine; by PKC and GRK6: serine 324 and serine 325. The tract at residues 329–352 (LSKGKRGGHSSVSTESESSSFHSS) is disordered. Serine 330 bears the Phosphoserine; by GRK6 mark. A Glycyl lysine isopeptide (Lys-Gly) (interchain with G-Cter in ubiquitin) cross-link involves residue lysine 331. The segment covering 337–352 (HSSVSTESESSSFHSS) has biased composition (low complexity). Serine 339 carries the post-translational modification Phosphoserine; by GRK6. 2 positions are modified to phosphoserine: serine 348 and serine 351.

It belongs to the G-protein coupled receptor 1 family. As to quaternary structure, monomer. Can form homodimers. Interacts with CD164. Interacts with ARRB2; the interaction is dependent on the C-terminal phosphorylation of CXCR4 and allows activation of MAPK1 and MAPK3. Interacts with ARR3; the interaction is dependent on the C-terminal phosphorylation of CXCR4 and modulates calcium mobilization. Interacts with RNF113A; the interaction, enhanced by CXCL12, promotes CXCR4 ubiquitination and subsequent degradation. Interacts (via the cytoplasmic C-terminal) with ITCH (via the WW domains I and II); the interaction, enhanced by CXCL12, promotes CXCR4 ubiquitination and leads to its degradation. Interacts with extracellular ubiquitin. Interacts with DBN1; this interaction is enhanced by antigenic stimulation. Following LPS binding, may form a complex with GDF5, HSP90AA1 and HSPA8. Post-translationally, phosphorylated on agonist stimulation. Rapidly phosphorylated on serine and threonine residues in the C-terminal. Phosphorylation at Ser-324 and Ser-325 leads to recruitment of ITCH, ubiquitination and protein degradation. Ubiquitinated after ligand binding, leading to its degradation. Ubiquitinated by ITCH at the cell membrane on agonist stimulation. The ubiquitin-dependent mechanism, endosomal sorting complex required for transport (ESCRT), then targets CXCR4 for lysosomal degradation. This process is dependent also on prior Ser-/Thr-phosphorylation in the C-terminal of CXCR4. Also binding of ARRB1 to STAM negatively regulates CXCR4 sorting to lysosomes though modulating ubiquitination of SFR5S. In terms of processing, sulfation is required for efficient binding of CXCL12/SDF-1alpha and promotes its dimerization. Post-translationally, O- and N-glycosylated. N-glycosylation can mask coreceptor function. The O-glycosylation chondroitin sulfate attachment does not affect interaction with CXCL12/SDF-1alpha nor its coreceptor activity.

The protein localises to the cell membrane. It localises to the cell junction. The protein resides in the early endosome. It is found in the late endosome. Its subcellular location is the lysosome. Functionally, receptor for the C-X-C chemokine CXCL12/SDF-1 that transduces a signal by increasing intracellular calcium ion levels and enhancing MAPK1/MAPK3 activation. Involved in the AKT signaling cascade. Plays a role in regulation of cell migration, e.g. during wound healing. Acts as a receptor for extracellular ubiquitin; leading to enhanced intracellular calcium ions and reduced cellular cAMP levels. Binds bacterial lipopolysaccharide (LPS) et mediates LPS-induced inflammatory response, including TNF secretion by monocytes. Involved in hematopoiesis and in cardiac ventricular septum formation. Also plays an essential role in vascularization of the gastrointestinal tract, probably by regulating vascular branching and/or remodeling processes in endothelial cells. Involved in cerebellar development. In the CNS, could mediate hippocampal-neuron survival. The polypeptide is C-X-C chemokine receptor type 4 (CXCR4) (Cercocebus atys (Sooty mangabey)).